A 117-amino-acid chain; its full sequence is MTRAKSGKISKKRHKKILKLAKGYRGRANSCFRVAIEKVEKALLYAYRDRRNRKRDFRGLWIQRINAAVREHGLIYSQFMGALKKAGINIDRKVLAELAVNNNDGFTSIVQQSKAYI.

Belongs to the bacterial ribosomal protein bL20 family.

Binds directly to 23S ribosomal RNA and is necessary for the in vitro assembly process of the 50S ribosomal subunit. It is not involved in the protein synthesizing functions of that subunit. The chain is Large ribosomal subunit protein bL20 from Rickettsia typhi (strain ATCC VR-144 / Wilmington).